Here is a 476-residue protein sequence, read N- to C-terminus: Bifunctional protein HldE (476 aa).

The tract at residues methionine 1 to serine 319 is ribokinase. An ATP-binding site is contributed by asparagine 195–glutamate 198. Aspartate 264 is an active-site residue. Residues methionine 345–glutamine 476 form a cytidylyltransferase region.

It in the N-terminal section; belongs to the carbohydrate kinase PfkB family. The protein in the C-terminal section; belongs to the cytidylyltransferase family. In terms of assembly, homodimer.

The enzyme catalyses D-glycero-beta-D-manno-heptose 7-phosphate + ATP = D-glycero-beta-D-manno-heptose 1,7-bisphosphate + ADP + H(+). It catalyses the reaction D-glycero-beta-D-manno-heptose 1-phosphate + ATP + H(+) = ADP-D-glycero-beta-D-manno-heptose + diphosphate. It participates in nucleotide-sugar biosynthesis; ADP-L-glycero-beta-D-manno-heptose biosynthesis; ADP-L-glycero-beta-D-manno-heptose from D-glycero-beta-D-manno-heptose 7-phosphate: step 1/4. The protein operates within nucleotide-sugar biosynthesis; ADP-L-glycero-beta-D-manno-heptose biosynthesis; ADP-L-glycero-beta-D-manno-heptose from D-glycero-beta-D-manno-heptose 7-phosphate: step 3/4. Its function is as follows. Catalyzes the phosphorylation of D-glycero-D-manno-heptose 7-phosphate at the C-1 position to selectively form D-glycero-beta-D-manno-heptose-1,7-bisphosphate. In terms of biological role, catalyzes the ADP transfer from ATP to D-glycero-beta-D-manno-heptose 1-phosphate, yielding ADP-D-glycero-beta-D-manno-heptose. In Shewanella denitrificans (strain OS217 / ATCC BAA-1090 / DSM 15013), this protein is Bifunctional protein HldE.